Consider the following 318-residue polypeptide: Deoxyribose-phosphate aldolase (318 aa).

Residue D155 is the Proton donor/acceptor of the active site. Residue K218 is the Schiff-base intermediate with acetaldehyde of the active site. K254 acts as the Proton donor/acceptor in catalysis.

It belongs to the DeoC/FbaB aldolase family. DeoC type 2 subfamily. Interacts with YBX1.

It localises to the cytoplasm. Its subcellular location is the cytoplasmic granule. The protein localises to the nucleus. The enzyme catalyses 2-deoxy-D-ribose 5-phosphate = D-glyceraldehyde 3-phosphate + acetaldehyde. Its pathway is carbohydrate degradation; 2-deoxy-D-ribose 1-phosphate degradation; D-glyceraldehyde 3-phosphate and acetaldehyde from 2-deoxy-alpha-D-ribose 1-phosphate: step 2/2. In terms of biological role, catalyzes a reversible aldol reaction between acetaldehyde and D-glyceraldehyde 3-phosphate to generate 2-deoxy-D-ribose 5-phosphate. Participates in stress granule (SG) assembly. May allow ATP production from extracellular deoxyinosine in conditions of energy deprivation. In Bos taurus (Bovine), this protein is Deoxyribose-phosphate aldolase (DERA).